The primary structure comprises 105 residues: Cell division protein FtsB (105 aa).

The Cytoplasmic segment spans residues 1–3; the sequence is MGK. A helical transmembrane segment spans residues 4–21; it reads LTLLLLVLLGWLQYSLWL. Over 22 to 105 the chain is Periplasmic; sequence GKNGVHDLVR…PAAPATQDNQ (84 aa). Residues 28–62 are a coiled coil; sequence DLVRVESDVAAQQSNNAQLKARNDQLFAEIDDLNG.

Belongs to the FtsB family. As to quaternary structure, part of a complex composed of FtsB, FtsL and FtsQ.

It is found in the cell inner membrane. Essential cell division protein. May link together the upstream cell division proteins, which are predominantly cytoplasmic, with the downstream cell division proteins, which are predominantly periplasmic. The sequence is that of Cell division protein FtsB from Sodalis glossinidius (strain morsitans).